The primary structure comprises 352 residues: C-C chemokine receptor type 5 (352 aa).

The Extracellular segment spans residues 1 to 30 (MDYQVSSPIYDIDYYTSEPCQKINVKQIAA). Residue Tyr-3 is modified to Sulfotyrosine. O-linked (GalNAc...) serine glycosylation is found at Ser-6 and Ser-7. A sulfotyrosine mark is found at Tyr-10, Tyr-14, and Tyr-15. Intrachain disulfides connect Cys-20–Cys-269 and Cys-101–Cys-178. A helical transmembrane segment spans residues 31–58 (RLLPPLYSLVFIFGFVGNMLVILILINC). At 59–68 (KRLKSMTDIY) the chain is on the cytoplasmic side. A helical membrane pass occupies residues 69–89 (LLNLAISDLFFLLTVPFWAHY). Residues 90–102 (AAAQWDFGNTMCQ) are Extracellular-facing. A helical membrane pass occupies residues 103–124 (LLTGLYFIGFFSGIFFIILLTI). Residues 125-141 (DRYLAIVHAVFALKART) are Cytoplasmic-facing. A helical membrane pass occupies residues 142-166 (VTFGVVTSVITWVVAVFASLPGIIF). At 167–198 (TRSQKEGLHYTCSSHFPYSQYQFWKNFQTLKI) the chain is on the extracellular side. Residues 199–218 (VILGLVLPLLVMVICYSGIL) form a helical membrane-spanning segment. Residues 219-235 (KTLLRCRNEKKRHRAVR) lie on the Cytoplasmic side of the membrane. Residues 236–260 (LIFTIMIVYFLFWAPYNIVLLLNTF) traverse the membrane as a helical segment. Topologically, residues 261–277 (QEFFGLNNCSSSNRLDQ) are extracellular. The chain crosses the membrane as a helical span at residues 278–301 (AMQVTETLGMTHCCINPIIYAFVG). Topologically, residues 302–352 (EKFRNYLLVFFQKHIAKRFCKCCSIFQQEAPERASSVYTRSTGEQEISVGL) are cytoplasmic. 3 S-palmitoyl cysteine lipidation sites follow: Cys-321, Cys-323, and Cys-324. Phosphoserine; by BARK1 occurs at positions 336, 337, 342, and 349.

The protein belongs to the G-protein coupled receptor 1 family. Interacts with PRAF2. Efficient ligand binding to CCL3/MIP-1alpha and CCL4/MIP-1beta requires sulfation, O-glycosylation and sialic acid modifications. Glycosylation on Ser-6 is required for efficient binding of CCL4. Interacts with GRK2. Interacts with ARRB1 and ARRB2. Interacts with CNIH4. Interacts with S100A4; this interaction stimulates T-lymphocyte chemotaxis. Sulfated on at least 2 of the N-terminal tyrosines. Sulfation is required for efficient binding of the chemokines, CCL3 and CCL4. In terms of processing, palmitoylation in the C-terminal is important for cell surface expression. Post-translationally, phosphorylation on serine residues in the C-terminal is stimulated by binding CC chemokines especially by APO-RANTES. O-glycosylated, but not N-glycosylated. Ser-6 appears to be the major site even if Ser-7 may be also O-glycosylated. Also sialylated glycans present which contribute to chemokine binding. Thr-16 and Ser-17 may also be glycosylated and, if so, with small moieties such as a T-antigen.

Its subcellular location is the cell membrane. Its function is as follows. Receptor for a number of inflammatory CC-chemokines including CCL3/MIP-1-alpha, CCL4/MIP-1-beta and RANTES and subsequently transduces a signal by increasing the intracellular calcium ion level. May play a role in the control of granulocytic lineage proliferation or differentiation. Participates in T-lymphocyte migration to the infection site by acting as a chemotactic receptor. The polypeptide is C-C chemokine receptor type 5 (CCR5) (Pan paniscus (Pygmy chimpanzee)).